A 201-amino-acid polypeptide reads, in one-letter code: 3-isopropylmalate dehydratase small subunit (201 aa).

Belongs to the LeuD family. LeuD type 1 subfamily. In terms of assembly, heterodimer of LeuC and LeuD.

The enzyme catalyses (2R,3S)-3-isopropylmalate = (2S)-2-isopropylmalate. The protein operates within amino-acid biosynthesis; L-leucine biosynthesis; L-leucine from 3-methyl-2-oxobutanoate: step 2/4. In terms of biological role, catalyzes the isomerization between 2-isopropylmalate and 3-isopropylmalate, via the formation of 2-isopropylmaleate. This chain is 3-isopropylmalate dehydratase small subunit, found in Shewanella piezotolerans (strain WP3 / JCM 13877).